Here is a 131-residue protein sequence, read N- to C-terminus: DNA-binding protein inhibitor ID-4 (131 aa).

Positions 36–88 constitute a bHLH domain; the sequence is ARYKMEEEETLCLQYDMNDCYSRLKRLVPTIPPNKKVSKVEILQHVIDYILDL.

Heterodimer with other HLH proteins. As to expression, during embryonic development, expressed in a number of neural tissues, including Rohon-Beard neurons, olfactory placode, eye primordia, and the trigeminal ganglia. Also expressed in other organs including the pronephros and liver primordium. Pronephric development begins by stage 25 and increases during tailbud stages. Expressed in both the tubules and the duct. As embryogenesis progresses, expressed in the migrating melanocytes and lateral line structures.

It is found in the nucleus. Functionally, transcriptional regulator (lacking a basic DNA binding domain) which negatively regulates the basic helix-loop-helix (bHLH) transcription factors by forming heterodimers and inhibiting their DNA binding and transcriptional activity. Inhibits the activity of both neurogenic (neurog1/neurogenin, neurod1/neuroD) and myogenic (myod1/myoD) bHLH factors. This is DNA-binding protein inhibitor ID-4 from Xenopus laevis (African clawed frog).